We begin with the raw amino-acid sequence, 97 residues long: Large ribosomal subunit protein uL23 (97 aa).

This sequence belongs to the universal ribosomal protein uL23 family. In terms of assembly, part of the 50S ribosomal subunit. Contacts protein L29, and trigger factor when it is bound to the ribosome.

One of the early assembly proteins it binds 23S rRNA. One of the proteins that surrounds the polypeptide exit tunnel on the outside of the ribosome. Forms the main docking site for trigger factor binding to the ribosome. The chain is Large ribosomal subunit protein uL23 from Allorhizobium ampelinum (strain ATCC BAA-846 / DSM 112012 / S4) (Agrobacterium vitis (strain S4)).